A 576-amino-acid chain; its full sequence is Sulfite reductase [NADPH] hemoprotein beta-component (576 aa).

Residues Cys-439, Cys-445, Cys-485, and Cys-489 each contribute to the [4Fe-4S] cluster site. Cys-489 contributes to the siroheme binding site.

This sequence belongs to the nitrite and sulfite reductase 4Fe-4S domain family. As to quaternary structure, alpha(8)-beta(8). The alpha component is a flavoprotein, the beta component is a hemoprotein. The cofactor is siroheme. [4Fe-4S] cluster serves as cofactor.

The enzyme catalyses hydrogen sulfide + 3 NADP(+) + 3 H2O = sulfite + 3 NADPH + 4 H(+). It participates in sulfur metabolism; hydrogen sulfide biosynthesis; hydrogen sulfide from sulfite (NADPH route): step 1/1. Functionally, component of the sulfite reductase complex that catalyzes the 6-electron reduction of sulfite to sulfide. This is one of several activities required for the biosynthesis of L-cysteine from sulfate. The sequence is that of Sulfite reductase [NADPH] hemoprotein beta-component from Aliivibrio salmonicida (strain LFI1238) (Vibrio salmonicida (strain LFI1238)).